The chain runs to 309 residues: DNA replication terminus site-binding protein (309 aa).

It belongs to the Tus family.

The protein resides in the cytoplasm. In terms of biological role, trans-acting protein required for termination of DNA replication. Binds to DNA replication terminator sequences (terA to terF) to prevent the passage of replication forks. The termination efficiency will be affected by the affinity of this protein for the terminator sequence. This chain is DNA replication terminus site-binding protein, found in Yersinia enterocolitica serotype O:8 / biotype 1B (strain NCTC 13174 / 8081).